A 313-amino-acid polypeptide reads, in one-letter code: Ribosomal protein L11 methyltransferase (313 aa).

Positions 151, 172, 194, and 245 each coordinate S-adenosyl-L-methionine.

It belongs to the methyltransferase superfamily. PrmA family.

It localises to the cytoplasm. It catalyses the reaction L-lysyl-[protein] + 3 S-adenosyl-L-methionine = N(6),N(6),N(6)-trimethyl-L-lysyl-[protein] + 3 S-adenosyl-L-homocysteine + 3 H(+). Methylates ribosomal protein L11. This chain is Ribosomal protein L11 methyltransferase, found in Nitrosomonas europaea (strain ATCC 19718 / CIP 103999 / KCTC 2705 / NBRC 14298).